A 466-amino-acid polypeptide reads, in one-letter code: Adenosylhomocysteinase (466 aa).

Substrate is bound by residues Thr-57, Asp-132, and Glu-192. Residue 193-195 (TTT) coordinates NAD(+). Residues Lys-222 and Asp-226 each contribute to the substrate site. Residues Asn-227, 256-261 (GYGDVG), Glu-279, Asn-314, 335-337 (IGH), and Asn-380 each bind NAD(+).

It belongs to the adenosylhomocysteinase family. NAD(+) is required as a cofactor.

The protein resides in the cytoplasm. The catalysed reaction is S-adenosyl-L-homocysteine + H2O = L-homocysteine + adenosine. Its pathway is amino-acid biosynthesis; L-homocysteine biosynthesis; L-homocysteine from S-adenosyl-L-homocysteine: step 1/1. In terms of biological role, may play a key role in the regulation of the intracellular concentration of adenosylhomocysteine. This Brucella abortus (strain S19) protein is Adenosylhomocysteinase.